A 161-amino-acid chain; its full sequence is Succinate dehydrogenase assembly factor 2, mitochondrial (161 aa).

The N-terminal 31 residues, 1–31, are a transit peptide targeting the mitochondrion; it reads MSLLRVTRSSGHLSAVCRLPARSISTTSILL.

The protein belongs to the SDHAF2 family. Interacts with the flavoprotein subunit within the SDH catalytic dimer.

It is found in the mitochondrion matrix. Plays an essential role in the assembly of succinate dehydrogenase (SDH), an enzyme complex (also referred to as respiratory complex II) that is a component of both the tricarboxylic acid (TCA) cycle and the mitochondrial electron transport chain, and which couples the oxidation of succinate to fumarate with the reduction of ubiquinone (coenzyme Q) to ubiquinol. Required for flavinylation (covalent attachment of FAD) of the flavoprotein subunit of the SDH catalytic dimer. The protein is Succinate dehydrogenase assembly factor 2, mitochondrial of Aedes aegypti (Yellowfever mosquito).